A 1468-amino-acid chain; its full sequence is Histone-lysine N-methyltransferase, H3 lysine-4 specific (1468 aa).

Polar residues predominate over residues 1 to 11 (MPYSSQQNGYT). Disordered stretches follow at residues 1–439 (MPYS…RSFG), 636–737 (EHKL…EEYD), 848–884 (SAPS…RKAI), 986–1103 (AGAH…TGEE), and 1141–1162 (PPEA…TDVP). Residues 12 to 26 (SASTSRLSEQTSSHS) are compositionally biased toward low complexity. 6 stretches are compositionally biased toward basic and acidic residues: residues 28 to 40 (SSRE…EKGR), 46 to 89 (EARH…DHWR), 99 to 109 (PRDDRRDEARN), 120 to 136 (PEHS…ESAH), 146 to 166 (LDSK…DSGR), and 174 to 215 (YEYD…RDDS). Residues 225-235 (RRSRSRSRSRS) show a composition bias toward basic residues. Basic and acidic residues-rich tracts occupy residues 236 to 287 (RSRD…EHST) and 294 to 305 (EDSKDLRHESQR). 2 stretches are compositionally biased toward polar residues: residues 306 to 315 (RVSASVQSAS) and 366 to 376 (SAPNGSATAPS). Residues 396-405 (PTREKAEEAR) show a composition bias toward basic and acidic residues. The segment covering 406-416 (TSSTRRPSSQT) has biased composition (low complexity). Positions 417-426 (NDNVNNSRDP) are enriched in polar residues. Low complexity-rich tracts occupy residues 650–662 (AAAS…PSTT) and 680–694 (PAAP…PASA). Over residues 713 to 722 (SSYEESRKLA) the composition is skewed to basic and acidic residues. The segment covering 849-861 (APSQHAPSQQIRT) has biased composition (polar residues). The span at 1012–1024 (KKKRGHTHRSKVH) shows a compositional bias: basic residues. The segment covering 1072–1085 (SDAEAGTDDVDSTE) has biased composition (acidic residues). Polar residues predominate over residues 1086 to 1097 (TDALSRSVSASV). A RxxxRR motif motif is present at residues 1293-1298 (RADSRR). Positions 1327-1444 (KQLKFAKSPI…AGEELTYDYK (118 aa)) constitute an SET domain. Residue Tyr-1443 participates in S-adenosyl-L-methionine binding. The Post-SET domain maps to 1453–1468 (DAIPCLCGSPGCRRFL).

This sequence belongs to the class V-like SAM-binding methyltransferase superfamily. As to quaternary structure, component of the Set1C/COMPASS complex.

The protein resides in the nucleus. It is found in the chromosome. It carries out the reaction L-lysyl(4)-[histone H3] + 3 S-adenosyl-L-methionine = N(6),N(6),N(6)-trimethyl-L-lysyl(4)-[histone H3] + 3 S-adenosyl-L-homocysteine + 3 H(+). The enzyme catalyses N(6)-methyl-L-lysyl(4)-[histone H3] + S-adenosyl-L-methionine = N(6),N(6)-dimethyl-L-lysyl(4)-[histone H3] + S-adenosyl-L-homocysteine + H(+). It catalyses the reaction N(6),N(6)-dimethyl-L-lysyl(4)-[histone H3] + S-adenosyl-L-methionine = N(6),N(6),N(6)-trimethyl-L-lysyl(4)-[histone H3] + S-adenosyl-L-homocysteine + H(+). Catalytic component of the COMPASS (Set1C) complex that specifically mono-, di- and trimethylates histone H3 to form H3K4me1/2/3. Binds RNAs which might negatively affect its histone methyltransferase activity. COMPASS recognizes ubiquitinated H2B on one face of the nucleosome which stimulates the methylation of H3 on the opposing face. The polypeptide is Histone-lysine N-methyltransferase, H3 lysine-4 specific (SET1) (Mycosarcoma maydis (Corn smut fungus)).